We begin with the raw amino-acid sequence, 143 residues long: UPF0299 membrane protein CGSHiEE_04225 (143 aa).

Transmembrane regions (helical) follow at residues 1–21, 33–52, 60–80, and 92–112; these read MIQKLFLLVRSLVILSIMLSL, VPGSIWGLLLLFLGLTTRVI, GASLLIRFMAVLFVPVSVGII, and ILLVPNIVSTCVTLLVIGFLG.

This sequence belongs to the UPF0299 family.

The protein localises to the cell inner membrane. The polypeptide is UPF0299 membrane protein CGSHiEE_04225 (Haemophilus influenzae (strain PittEE)).